Here is a 648-residue protein sequence, read N- to C-terminus: Replication restart protein PriA (648 aa).

One can recognise a Helicase ATP-binding domain in the interval 131 to 297 (TILNESNKPT…EIGKYQLVTL (167 aa)). 144–151 (GVTGSGKT) serves as a coordination point for ATP. The DEAH box motif lies at 240 to 243 (DEEH). The Zn(2+) site is built by C358, C361, C367, C370, C385, C388, C398, and C401. The 156-residue stretch at 393–548 (KIFSSCPECL…SFFANELEIR (156 aa)) folds into the Helicase C-terminal domain.

Belongs to the helicase family. PriA subfamily. Component of the replication restart primosome. Zn(2+) serves as cofactor.

It catalyses the reaction Couples ATP hydrolysis with the unwinding of duplex DNA by translocating in the 3'-5' direction.. It carries out the reaction ATP + H2O = ADP + phosphate + H(+). Its function is as follows. Initiates the restart of stalled replication forks, which reloads the replicative helicase on sites other than the origin of replication. Recognizes and binds to abandoned replication forks and remodels them to uncover a helicase loading site. Promotes assembly of the primosome at these replication forks. In Rickettsia felis (strain ATCC VR-1525 / URRWXCal2) (Rickettsia azadi), this protein is Replication restart protein PriA.